Consider the following 128-residue polypeptide: Fluoride-specific ion channel FluC (128 aa).

The next 4 helical transmembrane spans lie at 10 to 30, 40 to 60, 71 to 91, and 102 to 122; these read FLAVAIGAALGACARWLAGLW, TLLVNLAGGYLIGLALAVLLA, AAVTGFLGGLTTFSTFSAETV, and ALGYAALSLVGSLALTALGLA. Na(+) is bound by residues glycine 78 and threonine 81.

The protein belongs to the fluoride channel Fluc/FEX (TC 1.A.43) family.

The protein resides in the cell inner membrane. It catalyses the reaction fluoride(in) = fluoride(out). Its activity is regulated as follows. Na(+) is not transported, but it plays an essential structural role and its presence is essential for fluoride channel function. Fluoride-specific ion channel. Important for reducing fluoride concentration in the cell, thus reducing its toxicity. This Bordetella petrii (strain ATCC BAA-461 / DSM 12804 / CCUG 43448) protein is Fluoride-specific ion channel FluC.